Here is a 411-residue protein sequence, read N- to C-terminus: RING-H2 finger protein ATL65 (411 aa).

A disordered region spans residues 1–32; the sequence is MRFVAPPPRSGDNSPSPSPSSGISEEILSRSS. The segment covering 10-21 has biased composition (low complexity); that stretch reads SGDNSPSPSPSS. Residues 36-56 traverse the membrane as a helical segment; it reads LEFSPPLIAMVVVLAAAFLFV. Residues 156 to 198 form an RING-type; atypical zinc finger; it reads CAVCLLEFEEGDYVRTLPLCFHAFHLECIDEWLRSHPNCPLCR.

Belongs to the RING-type zinc finger family. ATL subfamily.

It localises to the membrane. It carries out the reaction S-ubiquitinyl-[E2 ubiquitin-conjugating enzyme]-L-cysteine + [acceptor protein]-L-lysine = [E2 ubiquitin-conjugating enzyme]-L-cysteine + N(6)-ubiquitinyl-[acceptor protein]-L-lysine.. It functions in the pathway protein modification; protein ubiquitination. This is RING-H2 finger protein ATL65 (ATL65) from Arabidopsis thaliana (Mouse-ear cress).